Here is a 197-residue protein sequence, read N- to C-terminus: Transposon Tn10 TetC protein (197 aa).

One can recognise an HTH tetR-type domain in the interval lysine 12 to isoleucine 72. The segment at residues serine 35–phenylalanine 54 is a DNA-binding region (H-T-H motif).

This Escherichia coli protein is Transposon Tn10 TetC protein (tetC).